Here is a 350-residue protein sequence, read N- to C-terminus: S-adenosylmethionine:tRNA ribosyltransferase-isomerase (350 aa).

It belongs to the QueA family. In terms of assembly, monomer.

It localises to the cytoplasm. It carries out the reaction 7-aminomethyl-7-carbaguanosine(34) in tRNA + S-adenosyl-L-methionine = epoxyqueuosine(34) in tRNA + adenine + L-methionine + 2 H(+). The protein operates within tRNA modification; tRNA-queuosine biosynthesis. Its function is as follows. Transfers and isomerizes the ribose moiety from AdoMet to the 7-aminomethyl group of 7-deazaguanine (preQ1-tRNA) to give epoxyqueuosine (oQ-tRNA). The polypeptide is S-adenosylmethionine:tRNA ribosyltransferase-isomerase (Bacillus cereus (strain 03BB102)).